The chain runs to 303 residues: D-alanine--D-alanine ligase (303 aa).

The ATP-grasp domain maps to 100-295 (KQLLRRHGIL…FPALIARLIE (196 aa)). ATP is bound at residue 127–180 (GLGYPLFVKPNTGGSSLCLSRVTQPEGLAPALEAVFAHCGEAIVEPAIPGVEVT). The Mg(2+) site is built by Asp249, Glu262, and Asn264.

Belongs to the D-alanine--D-alanine ligase family. The cofactor is Mg(2+). Requires Mn(2+) as cofactor.

Its subcellular location is the cytoplasm. The catalysed reaction is 2 D-alanine + ATP = D-alanyl-D-alanine + ADP + phosphate + H(+). The protein operates within cell wall biogenesis; peptidoglycan biosynthesis. In terms of biological role, cell wall formation. The protein is D-alanine--D-alanine ligase of Nitratidesulfovibrio vulgaris (strain DP4) (Desulfovibrio vulgaris).